The following is a 287-amino-acid chain: Probable ketose 3-epimerase (287 aa).

The active-site Proton donor/acceptor is glutamate 152. Positions 152 and 185 each coordinate Mn(2+). Substrate is bound at residue histidine 188. Position 211 (histidine 211) interacts with Mn(2+). Residue arginine 217 coordinates substrate. The Proton donor/acceptor role is filled by glutamate 246. Residue glutamate 246 participates in Mn(2+) binding.

This sequence belongs to the hyi family. Requires Mn(2+) as cofactor.

Its function is as follows. Probably catalyzes the epimerization of ketopentoses and/or ketohexoses at the C3 position. This is Probable ketose 3-epimerase from Synechocystis sp. (strain ATCC 27184 / PCC 6803 / Kazusa).